A 154-amino-acid polypeptide reads, in one-letter code: Ribosome maturation factor RimP (154 aa).

The protein belongs to the RimP family.

Its subcellular location is the cytoplasm. Functionally, required for maturation of 30S ribosomal subunits. The polypeptide is Ribosome maturation factor RimP (Clostridium perfringens (strain ATCC 13124 / DSM 756 / JCM 1290 / NCIMB 6125 / NCTC 8237 / Type A)).